We begin with the raw amino-acid sequence, 194 residues long: Insertion element IS136 uncharacterized 21.2 kDa protein (194 aa).

A disordered region spans residues 73–103; the sequence is SCDRACAPTPGRDPPVSSLPNSRQPARQNPR. Residues 90–103 are compositionally biased toward polar residues; it reads SLPNSRQPARQNPR.

The polypeptide is Insertion element IS136 uncharacterized 21.2 kDa protein (Agrobacterium tumefaciens (strain T37)).